The following is a 167-amino-acid chain: MTNNEQQKGAELQEKLVQVNRVAKVVKGGRIFGFTALTVVGDGNGKVGFGRGKAREVPVAIQKAMDAARKNMITVTLNGNTLQYPVKARHGSAKVFMQPASEGTGIIAGGAMRAVLEVAGVQNVLAKCYGSTNPVNVVRATFEGLKAMQAPEEIAAKRGKTVEEILG.

An S5 DRBM domain is found at 12 to 75 (LQEKLVQVNR…DAARKNMITV (64 aa)).

The protein belongs to the universal ribosomal protein uS5 family. In terms of assembly, part of the 30S ribosomal subunit. Contacts proteins S4 and S8.

Its function is as follows. With S4 and S12 plays an important role in translational accuracy. Located at the back of the 30S subunit body where it stabilizes the conformation of the head with respect to the body. The polypeptide is Small ribosomal subunit protein uS5 (Hahella chejuensis (strain KCTC 2396)).